A 425-amino-acid polypeptide reads, in one-letter code: Histidine--tRNA ligase (425 aa).

This sequence belongs to the class-II aminoacyl-tRNA synthetase family. In terms of assembly, homodimer.

It is found in the cytoplasm. The catalysed reaction is tRNA(His) + L-histidine + ATP = L-histidyl-tRNA(His) + AMP + diphosphate + H(+). The polypeptide is Histidine--tRNA ligase (Chlorobium chlorochromatii (strain CaD3)).